Consider the following 285-residue polypeptide: Complement C1q tumor necrosis factor-related protein 2 (285 aa).

The signal sequence occupies residues 1 to 15 (MIPWVLLACALPCAA). Residues 33–144 (QLVCSLPGPQ…PGLPGPCSCG (112 aa)) are disordered. In terms of domain architecture, Collagen-like spans 40-141 (GPQGPPGPPG…KGEPGLPGPC (102 aa)). Positions 41–51 (PQGPPGPPGAP) are enriched in pro residues. Positions 53-65 (PSGMMGRMGFPGK) are enriched in low complexity. Basic and acidic residues predominate over residues 66–78 (DGQDGHDGDRGDS). A compositionally biased stretch (low complexity) spans 84–120 (PGRTGNRGKPGPKGKAGAIGRAGPRGPKGVNGTPGKH). Residues 145–281 (SGHTKSAFSV…GFLIYADQDD (137 aa)) enclose the C1q domain.

May interact with ERFE. As to expression, expressed in adipose tissue.

Its subcellular location is the secreted. Its function is as follows. Involved in the regulation of lipid metabolism in adipose tissue and liver. In Homo sapiens (Human), this protein is Complement C1q tumor necrosis factor-related protein 2 (C1QTNF2).